Consider the following 221-residue polypeptide: Thymine/uracil-DNA glycosylase (221 aa).

The HhH domain maps to 105–133 (DYGGRVPRNRKAILDLPGVGKYTCAAVMC). Positions 197, 204, 207, and 213 each coordinate [4Fe-4S] cluster.

Belongs to the Nth/MutY family. The cofactor is [4Fe-4S] cluster.

The catalysed reaction is Hydrolyzes mismatched double-stranded DNA and polynucleotides, releasing free thymine.. DNA glycosylase that excises thymine from T/G mismatches and uracil from U/G mismatches. Acts as a repair enzyme able to counteract the mutagenic effect of spontaneous hydrolytic deamination of DNA 5-methylcytosine (5-meC) residues that leads to the formation of T/G mismatches. May also repair U/G mismatches arising from hydrolytic deamination of DNA cytosine residues. G/G, A/G, T/C and U/C are minor substrates. The polypeptide is Thymine/uracil-DNA glycosylase (Methanothermobacter thermautotrophicus (Methanobacterium thermoformicicum)).